The sequence spans 126 residues: Fatty acid-binding protein, liver (126 aa).

The residue at position 2 (alanine 2) is an N-acetylalanine.

The protein belongs to the calycin superfamily. Fatty-acid binding protein (FABP) family.

Its subcellular location is the cytoplasm. Its function is as follows. Binds free fatty acids and their coenzyme A derivatives, bilirubin, and some other small molecules in the cytoplasm. May be involved in intracellular lipid transport. The sequence is that of Fatty acid-binding protein, liver (fabp1) from Schroederichthys bivius (Narrowmouthed catshark).